The sequence spans 292 residues: Protease HtpX (292 aa).

2 helical membrane-spanning segments follow: residues valine 5–valine 25 and serine 34–leucine 54. Histidine 140 contributes to the Zn(2+) binding site. Glutamate 141 is an active-site residue. Histidine 144 is a Zn(2+) binding site. 2 consecutive transmembrane segments (helical) span residues leucine 155 to isoleucine 175 and isoleucine 193 to phenylalanine 213. Glutamate 218 contacts Zn(2+).

The protein belongs to the peptidase M48B family. It depends on Zn(2+) as a cofactor.

The protein localises to the cell inner membrane. The sequence is that of Protease HtpX from Xanthomonas campestris pv. campestris (strain B100).